Here is a 515-residue protein sequence, read N- to C-terminus: Protein disulfide-isomerase (515 aa).

An N-terminal signal peptide occupies residues 1-20 (MRSFAPWLVSLLGASAVVAA). 2 Thioredoxin domains span residues 21–132 (ADTE…QSLP) and 339–470 (VLDG…ENGK). Residues Cys54, Cys57, Cys389, and Cys392 each act as nucleophile in the active site. 2 cysteine pairs are disulfide-bonded: Cys54-Cys57 and Cys389-Cys392. Residues 478–515 (VASEETQEGGDVTEAAPSATEAETPAATDDEKAEHDEL) are disordered. Positions 490–504 (TEAAPSATEAETPAA) are enriched in low complexity. Positions 506–515 (DDEKAEHDEL) are enriched in basic and acidic residues. Positions 512–515 (HDEL) match the Prevents secretion from ER motif.

The protein belongs to the protein disulfide isomerase family.

The protein resides in the endoplasmic reticulum lumen. The enzyme catalyses Catalyzes the rearrangement of -S-S- bonds in proteins.. Functionally, participates in the folding of proteins containing disulfide bonds, may be involved in glycosylation, prolyl hydroxylation and triglyceride transfer. This Aspergillus niger protein is Protein disulfide-isomerase (pdiA).